A 137-amino-acid chain; its full sequence is Protein Turandot X (137 aa).

The first 24 residues, 1–24 (MKVPVFQLSCLLCLIVCLLCSVKA), serve as a signal peptide directing secretion.

Belongs to the Turandot family.

The protein resides in the secreted. Functionally, a humoral factor that may play a role in stress tolerance. The polypeptide is Protein Turandot X (Drosophila persimilis (Fruit fly)).